The primary structure comprises 523 residues: Sporulation protein 23 (523 aa).

As to quaternary structure, interacts with SPO1 in meiosis.

Functionally, regulates expression of PIS1. This is Sporulation protein 23 (SPO23) from Saccharomyces cerevisiae (strain ATCC 204508 / S288c) (Baker's yeast).